A 317-amino-acid polypeptide reads, in one-letter code: Insulin-like growth factor-binding protein 2 (317 aa).

The first 33 residues, 1 to 33 (MQPRLGGPALLLLPPLLLLLLLGAGGGDCGARA), serve as a signal peptide directing secretion. The 92-residue stretch at 35–126 (VLFRCPPCTP…VHGEGTCEKH (92 aa)) folds into the IGFBP N-terminal domain. Disulfide bonds link cysteine 39-cysteine 76, cysteine 42-cysteine 78, cysteine 50-cysteine 79, cysteine 68-cysteine 82, cysteine 90-cysteine 103, and cysteine 97-cysteine 123. Disordered stretches follow at residues 126-146 (HGDA…EEHS) and 190-218 (QHRQ…ARTP). Residues 216-298 (RTPCQQELDQ…APTIRGDPEC (83 aa)) enclose the Thyroglobulin type-1 domain. Intrachain disulfides connect cysteine 219–cysteine 253, cysteine 264–cysteine 275, and cysteine 277–cysteine 298. The short motif at 293 to 295 (RGD) is the Cell attachment site element.

In terms of assembly, interacts with IGF1. Interacts with IGF2. Interacts (via RGD motif) with integrin alpha5/ITGA5; this interaction induces cell migration, adhesion or apoptosis according to the context. Interacts with PTPRB; this interaction leads to PTPRB dimerization and inactivation. Post-translationally, cleaved by MMP9 leading to release of free IGF2 from IGFBP2-IGF2 complex, which contributes to enhance the motility and the growth of astrocytes. O-glycosylated.

It is found in the secreted. Functionally, multifunctional protein that plays a critical role in regulating the availability of IGFs such as IGF1 and IGF2 to their receptors and thereby regulates IGF-mediated cellular processes including proliferation, differentiation, and apoptosis in a cell-type specific manner. Functions coordinately with receptor protein tyrosine phosphatase beta/PTPRB and the IGF1 receptor to regulate IGF1-mediated signaling by stimulating the phosphorylation of PTEN leading to its inactivation and AKT1 activation. Plays a positive role in cell migration via interaction with integrin alpha5/ITGA5 through an RGD motif. Additionally, interaction with ITGA5/ITGB1 enhances the adhesion of endothelial progenitor cells to endothelial cells. Upon mitochondrial damage, facilitates apoptosis with ITGA5 of podocytes, and then activates the phosphorylation of focal adhesion kinase (FAK)-mediated mitochondrial injury. This Bos taurus (Bovine) protein is Insulin-like growth factor-binding protein 2 (IGFBP2).